Consider the following 468-residue polypeptide: ATP synthase subunit beta (468 aa).

155 to 162 contributes to the ATP binding site; that stretch reads GGAGVGKT.

This sequence belongs to the ATPase alpha/beta chains family. As to quaternary structure, F-type ATPases have 2 components, CF(1) - the catalytic core - and CF(0) - the membrane proton channel. CF(1) has five subunits: alpha(3), beta(3), gamma(1), delta(1), epsilon(1). CF(0) has three main subunits: a(1), b(2) and c(9-12). The alpha and beta chains form an alternating ring which encloses part of the gamma chain. CF(1) is attached to CF(0) by a central stalk formed by the gamma and epsilon chains, while a peripheral stalk is formed by the delta and b chains.

It is found in the cell membrane. It carries out the reaction ATP + H2O + 4 H(+)(in) = ADP + phosphate + 5 H(+)(out). Produces ATP from ADP in the presence of a proton gradient across the membrane. The catalytic sites are hosted primarily by the beta subunits. The sequence is that of ATP synthase subunit beta from Streptococcus pyogenes serotype M49 (strain NZ131).